Here is a 212-residue protein sequence, read N- to C-terminus: Cyclin-dependent kinase 2-interacting protein (212 aa).

Residue Met-1 is modified to N-acetylmethionine. Phosphoserine is present on residues Ser-69 and Ser-73. Positions Asn-74–Gln-106 form a coiled coil.

Belongs to the CINP family. Homodimer. Part of the 55LCC heterohexameric ATPase complex composed at least of AIRIM, AFG2A, AFG2B and CINP. Interacts with AIRIM. Interacts with CDK2 and CDC7. Interacts with the components of the replication complex, MCM2, MCM3, MCM4, MCM5, MCM6, MCM7 and with ORC2-containing complexes. Interacts with ATRIP. Interacts with CEP152. Associates with pre-60S ribosomal particles. Post-translationally, phosphorylated by CDC7 but not by CDK2.

The protein resides in the nucleus. In terms of biological role, component of the DNA replication complex, which interacts with two kinases, CDK2 and CDC7, thereby providing a functional and physical link between CDK2 and CDC7 during firing of the origins of replication. Regulates ATR-mediated checkpoint signaling in response to DNA damage. Part of the 55LCC heterohexameric ATPase complex which is chromatin-associated and promotes replisome proteostasis to maintain replication fork progression and genome stability. Required for replication fork progression, sister chromatid cohesion, and chromosome stability. The ATPase activity is specifically enhanced by replication fork DNA and is coupled to cysteine protease-dependent cleavage of replisome substrates in response to replication fork damage. Uses ATPase activity to process replisome substrates in S-phase, facilitating their proteolytic turnover from chromatin to ensure DNA replication and mitotic fidelity. As part of 55LCC complex, also involved in the cytoplasmic maturation steps of pre-60S ribosomal particles by promoting the release of shuttling protein RSL24D1/RLP24 from the pre-ribosomal particles. This is Cyclin-dependent kinase 2-interacting protein (CINP) from Bos taurus (Bovine).